The sequence spans 215 residues: MATAPYNYSYIFKYIIIGDMGVGKSCLLHQFTEKKFMADCPHTIGVEFGTRIIEVSGQKIKLQIWDTAGQERFRAVTRSYYRGAAGALMVYDITRRSTYNHLSSWLTDARNLTNPNTVIILIGNKADLEAQRDVTYEEAKQFAEENGLLFLEASAKTGENVEDAFLEAAKKIYQNIQDGSLDLNAAESGVQHKPSAPQGGRLTSEPQPQREGCGC.

N-acetylalanine is present on alanine 2. Glycine 21, valine 22, glycine 23, lysine 24, serine 25, cysteine 26, alanine 38, aspartate 39, cysteine 40, histidine 42, and threonine 43 together coordinate GTP. Serine 25 lines the Mg(2+) pocket. A Switch 1 motif is present at residues 42–47 (HTIGVE). Mg(2+)-binding residues include threonine 43 and aspartate 66. The short motif at 68–77 (AGQERFRAVT) is the Switch 2 element. Glycine 69, asparagine 124, lysine 125, aspartate 127, alanine 155, and lysine 156 together coordinate GTP. The segment at 188–215 (SGVQHKPSAPQGGRLTSEPQPQREGCGC) is disordered. S-geranylgeranyl cysteine attachment occurs at residues cysteine 213 and cysteine 215. Cysteine 215 carries the cysteine methyl ester modification.

This sequence belongs to the small GTPase superfamily. Rab family. The cofactor is Mg(2+).

The protein resides in the recycling endosome. Its subcellular location is the early endosome membrane. It is found in the golgi apparatus membrane. It localises to the golgi apparatus. The protein localises to the trans-Golgi network membrane. The protein resides in the cytoplasmic vesicle. Its subcellular location is the phagosome. The enzyme catalyses GTP + H2O = GDP + phosphate + H(+). Its activity is regulated as follows. Regulated by guanine nucleotide exchange factors (GEFs) including DENND6A and DENND6B which promote the exchange of bound GDP for free GTP. Regulated by GTPase activating proteins (GAPs) which increase the GTP hydrolysis activity. Inhibited by GDP dissociation inhibitors (GDIs) which prevent Rab-GDP dissociation. Its function is as follows. The small GTPases Rab are key regulators of intracellular membrane trafficking, from the formation of transport vesicles to their fusion with membranes. Rabs cycle between an inactive GDP-bound form and an active GTP-bound form that is able to recruit to membranes different set of downstream effectors directly responsible for vesicle formation, movement, tethering and fusion. Involved in membrane trafficking between the Golgi complex and endosomes during early embryonic development. Regulates the Golgi to endosome transport of FGFR-containing vesicles during early development, a key process for developing basement membrane and epiblast and primitive endoderm lineages during early postimplantation development. May act by modulating the kinesin KIF16B-cargo association to endosomes. Regulates, together with its guanine nucleotide exchange factor DENND6A, the specific endocytic transport of ADAM10, N-cadherin/CDH2 shedding and cell-cell adhesion. Mediates endosomal tethering and fusion through the interaction with RUFY1 and RAB4B. Interaction with RAB11FIP1 may function in the process of neurite formation. This is Ras-related protein Rab-14 (RAB14) from Gallus gallus (Chicken).